Consider the following 219-residue polypeptide: Uracil-DNA glycosylase (219 aa).

The active-site Proton acceptor is the aspartate 61.

This sequence belongs to the uracil-DNA glycosylase (UDG) superfamily. UNG family.

It is found in the cytoplasm. The catalysed reaction is Hydrolyzes single-stranded DNA or mismatched double-stranded DNA and polynucleotides, releasing free uracil.. In terms of biological role, excises uracil residues from the DNA which can arise as a result of misincorporation of dUMP residues by DNA polymerase or due to deamination of cytosine. The sequence is that of Uracil-DNA glycosylase from Neisseria meningitidis serogroup B (strain ATCC BAA-335 / MC58).